The chain runs to 106 residues: MLMLTFASTSSDLLPMSNVFDVQSSVFYNEKNMFYSSSQDFSSCEDSSQFADDSGFFDDSEISSIGYEIGSKLAAMCDDFDAQMMSYSAHASDRSLFHRLLDFFAF.

A BH3-like region spans residues 73-81 (LAAMCDDFD).

Interacts with ced-9; the interaction results in ced-4 release from the ced-4/ced-9 complex. Interaction with ced-9 may enhance interaction of ced-9 with drp-1, but not with ced-4. A ced-9/egl-1 complex may recruit drp-1 to the mitochondrial surface.

It is found in the synapse. Its function is as follows. Plays a major role in programmed cell death (PCD or apoptosis) by negatively regulating ced-9. Binds to and directly inhibits the activity of ced-9, releasing the cell death activator ced-4 from a ced-9/ced-4 containing protein complex and allowing ced-4 to activate the cell-killing caspase ced-3. Required to activate programmed cell death in the sister cells of the serotonergic neurosecretory motor (NSM) neurons during embryogenesis. Required to activate programmed cell death in the sister cells of the M4 motor neuron and I1 pharyngeal neuron during embryogenesis. During larval development, required for the elimination of transient presynaptic components upstream of ced-9, ced-4 and ced-3 apoptotic pathway. Together with ain-1, a component of the miRNA-induced-silencing complex (miRISC), and probably upstream of ced-3 and ced-4, regulates temporal cell fate patterning during larval development. Has been shown in two studies to be dispensable in mitochondrial dynamics and morphology during early embryonic development. However, one study shows that during larval development, egl-1 is involved in modulating mitochondrial dynamics, perhaps acting by stabilizing the interaction between ced-9 and drp-1 in order to promote mitochondrial fission. Involved in inducing mitochondrial fragmentation during apoptosis, probably acting via ced-9 and dynamin-related protein drp-1. The protein is Programmed cell death activator egl-1 of Caenorhabditis elegans.